Reading from the N-terminus, the 487-residue chain is Probable Xaa-Pro aminopeptidase AFUB_014460 (487 aa).

D267, D278, E416, and E455 together coordinate Mn(2+).

It belongs to the peptidase M24B family. Mn(2+) is required as a cofactor.

It carries out the reaction Release of any N-terminal amino acid, including proline, that is linked to proline, even from a dipeptide or tripeptide.. Catalyzes the removal of a penultimate prolyl residue from the N-termini of peptides. In Aspergillus fumigatus (strain CBS 144.89 / FGSC A1163 / CEA10) (Neosartorya fumigata), this protein is Probable Xaa-Pro aminopeptidase AFUB_014460.